Reading from the N-terminus, the 356-residue chain is UDP-N-acetylglucosamine--N-acetylmuramyl-(pentapeptide) pyrophosphoryl-undecaprenol N-acetylglucosamine transferase (356 aa).

UDP-N-acetyl-alpha-D-glucosamine contacts are provided by residues Thr14–Gly16, Asn126, Arg162, Ser190, Ile244, and Gln289.

This sequence belongs to the glycosyltransferase 28 family. MurG subfamily.

The protein resides in the cell inner membrane. The catalysed reaction is di-trans,octa-cis-undecaprenyl diphospho-N-acetyl-alpha-D-muramoyl-L-alanyl-D-glutamyl-meso-2,6-diaminopimeloyl-D-alanyl-D-alanine + UDP-N-acetyl-alpha-D-glucosamine = di-trans,octa-cis-undecaprenyl diphospho-[N-acetyl-alpha-D-glucosaminyl-(1-&gt;4)]-N-acetyl-alpha-D-muramoyl-L-alanyl-D-glutamyl-meso-2,6-diaminopimeloyl-D-alanyl-D-alanine + UDP + H(+). The protein operates within cell wall biogenesis; peptidoglycan biosynthesis. Cell wall formation. Catalyzes the transfer of a GlcNAc subunit on undecaprenyl-pyrophosphoryl-MurNAc-pentapeptide (lipid intermediate I) to form undecaprenyl-pyrophosphoryl-MurNAc-(pentapeptide)GlcNAc (lipid intermediate II). The chain is UDP-N-acetylglucosamine--N-acetylmuramyl-(pentapeptide) pyrophosphoryl-undecaprenol N-acetylglucosamine transferase from Cupriavidus pinatubonensis (strain JMP 134 / LMG 1197) (Cupriavidus necator (strain JMP 134)).